A 290-amino-acid chain; its full sequence is Acetyl-coenzyme A carboxylase carboxyl transferase subunit beta (290 aa).

Residues 28–290 enclose the CoA carboxyltransferase N-terminal domain; sequence LMNKCSKCGT…TVREGLSHGG (263 aa). Zn(2+)-binding residues include Cys32, Cys35, Cys51, and Cys54. Residues 32–54 form a C4-type zinc finger; sequence CSKCGTIQYSKELDKNLKVCSSC.

It belongs to the AccD/PCCB family. In terms of assembly, acetyl-CoA carboxylase is a heterohexamer composed of biotin carboxyl carrier protein (AccB), biotin carboxylase (AccC) and two subunits each of ACCase subunit alpha (AccA) and ACCase subunit beta (AccD). Zn(2+) serves as cofactor.

Its subcellular location is the cytoplasm. The enzyme catalyses N(6)-carboxybiotinyl-L-lysyl-[protein] + acetyl-CoA = N(6)-biotinyl-L-lysyl-[protein] + malonyl-CoA. It functions in the pathway lipid metabolism; malonyl-CoA biosynthesis; malonyl-CoA from acetyl-CoA: step 1/1. Its function is as follows. Component of the acetyl coenzyme A carboxylase (ACC) complex. Biotin carboxylase (BC) catalyzes the carboxylation of biotin on its carrier protein (BCCP) and then the CO(2) group is transferred by the transcarboxylase to acetyl-CoA to form malonyl-CoA. The chain is Acetyl-coenzyme A carboxylase carboxyl transferase subunit beta from Paenibacillus sp. (strain JDR-2).